An 859-amino-acid chain; its full sequence is Anoctamin-7 (859 aa).

At 1–297 (MLRGQAREED…YFAWLGFYTG (297 aa)) the chain is on the cytoplasmic side. The segment at 25–50 (GCSYGSTAQASEAGKQQVAPSRVGSS) is disordered. The helical transmembrane segment at 298–318 (WLLPAAVVGTVVFLVGCFLVF) threads the bilayer. Residues 319 to 362 (SDIPTQELCHSSDSFDMCPLCSDCSFWLLSSACTLAQAGRLFDH) lie on the Extracellular side of the membrane. A helical membrane pass occupies residues 363 to 383 (GGTVFFSLFMALWAVLLLEYW). Residues 384–441 (KRKNATLAYRWDCSDYEDIEERPRPQFAATAPMTALNPITGEDEPYFPEKNRVRRMLA) lie on the Cytoplasmic side of the membrane. The chain crosses the membrane as a helical span at residues 442–462 (GSVVLLMMVAVVIMCLVSVIL). The Extracellular segment spans residues 463-492 (YRAVMAIIVSRSDNAFLSAWASRIASLTGS). The chain crosses the membrane as a helical span at residues 493 to 513 (VVNLVFILILSKVYVLLAQVL). Over 514–530 (TRWEMHRTQTEFEDAFT) the chain is Cytoplasmic. A helical transmembrane segment spans residues 531-551 (LKVFIFQFVNFYASPVYIAFF). Topologically, residues 552–651 (KGRFVGYPGN…FHEYLEMVLQ (100 aa)) are extracellular. The helical transmembrane segment at 652-672 (FGFVTIFVAACPLAPLFALLN) threads the bilayer. Residues 673-700 (NWVEIRLDARKFVCEYRRPVAERAQDIG) lie on the Cytoplasmic side of the membrane. A helical membrane pass occupies residues 701 to 721 (IWFHILTGLTHLAVISNAFLL). The Extracellular segment spans residues 722 to 780 (AFSSDFLPRVYYSWTHAPDLHGFLNFTLARAPPTFTSAHNRTCRYRAFRDDDGHYSPTY). 2 N-linked (GlcNAc...) asparagine glycosylation sites follow: asparagine 746 and asparagine 761. A helical membrane pass occupies residues 781-801 (WTLLAIRLAFVIVFEHVVFSI). The Cytoplasmic portion of the chain corresponds to 802-859 (GRVLDLLVPDIPESVEIKVKREYYLAKQALAENEALLGATGVKDDQPPSSEPSLGLPA).

It belongs to the anoctamin family. Highly expressed in the stomach. Expressed at low levels in small intestine and large intestine.

The protein localises to the cell membrane. It localises to the endoplasmic reticulum. It catalyses the reaction a 1,2-diacyl-sn-glycero-3-phospho-L-serine(in) = a 1,2-diacyl-sn-glycero-3-phospho-L-serine(out). It carries out the reaction a beta-D-galactosyl-(1&lt;-&gt;1')-N-acylsphing-4-enine(out) = a beta-D-galactosyl-(1&lt;-&gt;1')-N-acylsphing-4-enine(in). The enzyme catalyses a 1,2-diacyl-sn-glycero-3-phosphocholine(in) = a 1,2-diacyl-sn-glycero-3-phosphocholine(out). In terms of biological role, has calcium-dependent phospholipid scramblase activity; scrambles phosphatidylserine, phosphatidylcholine and galactosylceramide. Does not exhibit calcium-activated chloride channel (CaCC) activity. May play a role in cell-cell interactions. The sequence is that of Anoctamin-7 (Ano7) from Mus musculus (Mouse).